Here is a 161-residue protein sequence, read N- to C-terminus: Crossover junction endodeoxyribonuclease RuvC (161 aa).

Residues D7, E67, and D139 contribute to the active site. Residues D7, E67, and D139 each contribute to the Mg(2+) site.

It belongs to the RuvC family. As to quaternary structure, homodimer which binds Holliday junction (HJ) DNA. The HJ becomes 2-fold symmetrical on binding to RuvC with unstacked arms; it has a different conformation from HJ DNA in complex with RuvA. In the full resolvosome a probable DNA-RuvA(4)-RuvB(12)-RuvC(2) complex forms which resolves the HJ. Requires Mg(2+) as cofactor.

It localises to the cytoplasm. The enzyme catalyses Endonucleolytic cleavage at a junction such as a reciprocal single-stranded crossover between two homologous DNA duplexes (Holliday junction).. Its function is as follows. The RuvA-RuvB-RuvC complex processes Holliday junction (HJ) DNA during genetic recombination and DNA repair. Endonuclease that resolves HJ intermediates. Cleaves cruciform DNA by making single-stranded nicks across the HJ at symmetrical positions within the homologous arms, yielding a 5'-phosphate and a 3'-hydroxyl group; requires a central core of homology in the junction. The consensus cleavage sequence is 5'-(A/T)TT(C/G)-3'. Cleavage occurs on the 3'-side of the TT dinucleotide at the point of strand exchange. HJ branch migration catalyzed by RuvA-RuvB allows RuvC to scan DNA until it finds its consensus sequence, where it cleaves and resolves the cruciform DNA. This is Crossover junction endodeoxyribonuclease RuvC from Syntrophotalea carbinolica (strain DSM 2380 / NBRC 103641 / GraBd1) (Pelobacter carbinolicus).